A 460-amino-acid polypeptide reads, in one-letter code: 3-isopropylmalate dehydratase large subunit (460 aa).

[4Fe-4S] cluster contacts are provided by C338, C398, and C401.

The protein belongs to the aconitase/IPM isomerase family. LeuC type 1 subfamily. Heterodimer of LeuC and LeuD. It depends on [4Fe-4S] cluster as a cofactor.

The catalysed reaction is (2R,3S)-3-isopropylmalate = (2S)-2-isopropylmalate. The protein operates within amino-acid biosynthesis; L-leucine biosynthesis; L-leucine from 3-methyl-2-oxobutanoate: step 2/4. Functionally, catalyzes the isomerization between 2-isopropylmalate and 3-isopropylmalate, via the formation of 2-isopropylmaleate. The protein is 3-isopropylmalate dehydratase large subunit of Streptococcus gordonii (strain Challis / ATCC 35105 / BCRC 15272 / CH1 / DL1 / V288).